We begin with the raw amino-acid sequence, 319 residues long: Aspartate carbamoyltransferase catalytic subunit (319 aa).

Carbamoyl phosphate-binding residues include Arg-65 and Thr-66. Lys-93 provides a ligand contact to L-aspartate. Residues Arg-115, His-149, and Gln-152 each coordinate carbamoyl phosphate. Arg-182 and Arg-237 together coordinate L-aspartate. Residues Gly-278 and Pro-279 each contribute to the carbamoyl phosphate site.

This sequence belongs to the aspartate/ornithine carbamoyltransferase superfamily. ATCase family. Heterododecamer (2C3:3R2) of six catalytic PyrB chains organized as two trimers (C3), and six regulatory PyrI chains organized as three dimers (R2).

The enzyme catalyses carbamoyl phosphate + L-aspartate = N-carbamoyl-L-aspartate + phosphate + H(+). The protein operates within pyrimidine metabolism; UMP biosynthesis via de novo pathway; (S)-dihydroorotate from bicarbonate: step 2/3. Its function is as follows. Catalyzes the condensation of carbamoyl phosphate and aspartate to form carbamoyl aspartate and inorganic phosphate, the committed step in the de novo pyrimidine nucleotide biosynthesis pathway. The protein is Aspartate carbamoyltransferase catalytic subunit of Janthinobacterium sp. (strain Marseille) (Minibacterium massiliensis).